Reading from the N-terminus, the 658-residue chain is MEGDASDPEPPDAGEDSKSENGENAPIYCICRKPDINCFMIGCDNCNEWFHGDCIRITEKMAKAIREWYCRECREKDPKLEIRYRHKKSRERDSSERDGSEPRDEGGGRKRPAPDPDLQRRAGAGTGVGAMLARGSASPHKSSPQPLVATPSQHHQQQQQQQQIKRSARMCGECEACRRTEDCGHCDFCRDMKKFGGPNKIRQKCRLRQCQLRARESYKYFPSSLSPVTPSESLPRPRRPLPTQPQPQPSQKLGRLREDEGAVASAAVKEPPEATATPEPLSDEDLPLDSELYQDFCAGAFDDHSLPWMSDTEESQFLDPALRKRAVKVKHVKRREKKSEKKKDERYKRHRQKQKHKDKWKHPERADAKDPASLPQCLGPGCVRAAQPGSKYCSDDCGMKLAANRIYEILPQRIQQWQQSPCIAEEHGKKLLERIRREQQSARTRLQEMERRFHELEAIILRAKQQAVREDEESNEGDSDDTDLQIFCVSCGHPINPRVALRHMERCYAKYESQTSFGSMYPTRIEGATRLFCDVYNPQSKTYCKRLQVLCPEHSRDPKVPADEVCGCPLVRDVFELTGDFCRLPKRQCNRHYCWEKLRRAEVDLERVRVWYKLDELFEQERNVRTAMTNRAGLLALMLHQTIQHDPLTTDLRSNAER.

An N-acetylmethionine modification is found at Met1. Residues 1 to 14 (MEGDASDPEPPDAG) are compositionally biased toward acidic residues. The interval 1-20 (MEGDASDPEPPDAGEDSKSE) is disordered. A phosphoserine mark is found at Ser6 and Ser19. The segment at 28–76 (YCICRKPDINCFMIGCDNCNEWFHGDCIRITEKMAKAIREWYCRECREK) adopts a PHD-type zinc-finger fold. The segment at 84–164 (YRHKKSRERD…HQQQQQQQQI (81 aa)) is disordered. Basic and acidic residues predominate over residues 90 to 120 (RERDSSERDGSEPRDEGGGRKRPAPDPDLQR). Positions 153 to 163 (QHHQQQQQQQQ) are enriched in low complexity. The CXXC-type zinc finger occupies 162-211 (QQIKRSARMCGECEACRRTEDCGHCDFCRDMKKFGGPNKIRQKCRLRQCQ). Cys171, Cys174, Cys177, Cys183, Cys186, Cys189, Cys205, and Cys210 together coordinate Zn(2+). Disordered stretches follow at residues 221–285 (FPSS…SDED) and 327–373 (VKVK…DPAS). Ser226 carries the post-translational modification Phosphoserine. A Phosphothreonine modification is found at Thr229. Residue Lys252 forms a Glycyl lysine isopeptide (Lys-Gly) (interchain with G-Cter in SUMO2) linkage. The segment covering 327–336 (VKVKHVKRRE) has biased composition (basic residues). Positions 337-347 (KKSEKKKDERY) are enriched in basic and acidic residues. Residues 348–360 (KRHRQKQKHKDKW) are compositionally biased toward basic residues. Over residues 361–370 (KHPERADAKD) the composition is skewed to basic and acidic residues. A coiled-coil region spans residues 428-470 (GKKLLERIRREQQSARTRLQEMERRFHELEAIILRAKQQAVRE).

As to quaternary structure, component of the SET1 complex, at least composed of the catalytic subunit (SETD1A or SETD1B), WDR5, WDR82, RBBP5, ASH2L/ASH2, CXXC1/CFP1, HCFC1 and DPY30. Interacts with SETD1A. Interacts with ZNF335. Interacts with PRDM9; this interaction does not link PRDM9-activated recombination hotspot sites with DSB machinery and is not required for the hotspot recognition pathway. Interacts with histone H3K4me3. Post-translationally, may be regulated by proteolysis.

Its subcellular location is the nucleus speckle. It localises to the nucleus. Transcriptional activator that exhibits a unique DNA binding specificity for CpG unmethylated motifs with a preference for CpGG. The sequence is that of CXXC-type zinc finger protein 1 (CXXC1) from Bos taurus (Bovine).